A 211-amino-acid polypeptide reads, in one-letter code: Troponin I, cardiac muscle (211 aa).

The segment at 1 to 24 (MADESSDAAGEPQPAPAPVRRRSS) is disordered. Ala2 carries the N-acetylalanine modification. Residues Ser5 and Ser6 each carry the phosphoserine modification. Phosphoserine; by PKA and PKD/PRKD1 occurs at positions 23 and 24. Phosphotyrosine is present on Tyr27. Thr32 carries the phosphothreonine; by STK4/MST1 modification. The interval 33 to 80 (EPHAKKKSKISASRKLQLKTLMLQIAKQEMEREAEERRGEKGRVLRTR) is involved in binding TNC. 2 positions are modified to phosphoserine; by PKC/PRKCE: Ser43 and Ser45. A Phosphothreonine; by STK4/MST1 modification is found at Thr52. Phosphothreonine is present on Thr79. Thr130 and Thr144 each carry phosphothreonine; by STK4/MST1. Residues 130-151 (TQKIYDLRGKFKRPTLRRVRIS) form an involved in binding TNC and actin region. A phosphoserine mark is found at Ser151, Ser167, and Ser200.

This sequence belongs to the troponin I family. In terms of assembly, interacts with TRIM63. Binds to actin and tropomyosin. Interacts with STK4/MST1. In terms of processing, phosphorylated at Ser-23 and Ser-24 by PRKD1; phosphorylation reduces myofilament calcium sensitivity. Phosphorylated preferentially at Thr-32. Phosphorylation by STK4/MST1 alters its binding affinity to TNNC1 (cardiac Tn-C) and TNNT2 (cardiac Tn-T). Phosphorylated at Ser-43 and Ser-45 by PRKCE; phosphorylation increases myocardium contractile dysfunction.

Its function is as follows. Troponin I is the inhibitory subunit of troponin, the thin filament regulatory complex which confers calcium-sensitivity to striated muscle actomyosin ATPase activity. The polypeptide is Troponin I, cardiac muscle (Tnni3) (Mus musculus (Mouse)).